Here is a 181-residue protein sequence, read N- to C-terminus: Mitochondrial inner membrane protein Mpv17 (181 aa).

4 helical membrane passes run 20–37, 51–67, 86–103, and 152–169; these read MCIA…AQYL, FSFL…FIWF, LCID…AILF, and VILN…LSYI.

Belongs to the peroxisomal membrane protein PXMP2/4 family.

It is found in the mitochondrion inner membrane. Its function is as follows. Involved in mitochondria homeostasis. This Caenorhabditis elegans protein is Mitochondrial inner membrane protein Mpv17.